Here is a 1088-residue protein sequence, read N- to C-terminus: Myocardin-related transcription factor B (1088 aa).

A Phosphoserine modification is found at Glu22. One copy of the RPEL 1 repeat lies at 40-65 (EVLQLRLQQRRTREQLVDQGIMPPLK). Ser66 is modified (phosphoserine). RPEL repeat units follow at residues 84-109 (NFLKHKIRSRPDRSELVRMHILEETF) and 128-153 (DDLNEKIAQRPGPMELVEKNILPVDS). Disordered regions lie at residues 165–310 (EDYP…NEPQ), 349–389 (KPLN…PSSL), 472–508 (AELPPTGTSNATRVENVHSPLPISPSPSEQSSLSTDD), and 528–553 (LSSSPLRMTNNEDSLSPTSSTLSNLE). Residues 197 to 213 (SAASPSEPKVSESPSPV) show a composition bias toward low complexity. Residues 214-226 (TTNTPAQFASVSP) show a composition bias toward polar residues. The segment covering 238-248 (ADQPPPRPAAP) has biased composition (pro residues). Positions 272–287 (NPNDKHRSKKCKDPKP) are enriched in basic and acidic residues. Residues 355–366 (NSNSGNSALNNA) are compositionally biased toward low complexity. Phosphothreonine is present on residues Thr367 and Thr370. Over residues 367–378 (TPNTPRQNTSTP) the composition is skewed to polar residues. Residues 389–423 (LDDLKVSELKTELKLRGLPVSGTKPDLIERLKPYQ) form the SAP domain. Residues 528-540 (LSSSPLRMTNNED) show a composition bias toward polar residues. Phosphoserine is present on residues Ser541 and Ser543. The span at 541 to 550 (SLSPTSSTLS) shows a compositional bias: low complexity. Residues 545-601 (TSSTLSNLELDAAEKDRKLQEKEKQIEELKRKLEQEQKLVEVLKMQLEVEKRGQQQR) are a coiled coil. A required for interaction with itself and with MRTFA region spans residues 563-591 (LQEKEKQIEELKRKLEQEQKLVEVLKMQL). Disordered stretches follow at residues 595–655 (KRGQ…QPVS) and 829–886 (NAPL…STQA). A Glycyl lysine isopeptide (Lys-Gly) (interchain with G-Cter in SUMO1) cross-link involves residue Lys628. Residues 829–838 (NAPLPSLQNG) show a composition bias toward polar residues. Residues 867-879 (KTKDPPRYEEAIK) are compositionally biased toward basic and acidic residues. Position 921 is a phosphoserine (Ser921).

Interacts with MRTFA and SRF. Post-translationally, O-glycosylated.

Its subcellular location is the nucleus. In terms of biological role, acts as a transcriptional coactivator of serum response factor (SRF). Required for skeletal myogenic differentiation. In Homo sapiens (Human), this protein is Myocardin-related transcription factor B.